Consider the following 529-residue polypeptide: V-set and immunoglobulin domain-containing protein 10 (529 aa).

Positions 1–18 are cleaved as a signal peptide; the sequence is MMITSAVVLYLLLLSHQT. Ig-like C2-type domains follow at residues 19 to 110 and 129 to 217; these read VSEE…QTLS and PATF…QELL. At 21–411 the chain is on the extracellular side; sequence EEQVQQFVIG…LNVKTSAGNG (391 aa). N-linked (GlcNAc...) asparagine glycosylation is found at Asn34, Asn35, Asn46, Asn135, Asn147, Asn159, Asn211, Asn269, Asn280, Asn284, Asn330, Asn357, and Asn376. A disulfide bond links Cys40 and Cys96. Cysteines 150 and 199 form a disulfide. An Ig-like C2-type 3 domain is found at 317–403; the sequence is PTGQPLATAL…GARELEVYLN (87 aa). A disulfide bridge links Cys335 with Cys387. A helical membrane pass occupies residues 412 to 432; that stretch reads GAIVGIFVSVLVMMIGIVVGV. The Cytoplasmic portion of the chain corresponds to 433–529; the sequence is TVYTKRDRIC…PQRAELQPAV (97 aa).

The protein localises to the membrane. In Danio rerio (Zebrafish), this protein is V-set and immunoglobulin domain-containing protein 10 (vsig10).